The following is a 470-amino-acid chain: ATP synthase subunit beta (470 aa).

155–162 (GGAGVGKT) provides a ligand contact to ATP.

Belongs to the ATPase alpha/beta chains family. In terms of assembly, F-type ATPases have 2 components, CF(1) - the catalytic core - and CF(0) - the membrane proton channel. CF(1) has five subunits: alpha(3), beta(3), gamma(1), delta(1), epsilon(1). CF(0) has three main subunits: a(1), b(2) and c(9-12). The alpha and beta chains form an alternating ring which encloses part of the gamma chain. CF(1) is attached to CF(0) by a central stalk formed by the gamma and epsilon chains, while a peripheral stalk is formed by the delta and b chains.

It localises to the cell inner membrane. It carries out the reaction ATP + H2O + 4 H(+)(in) = ADP + phosphate + 5 H(+)(out). In terms of biological role, produces ATP from ADP in the presence of a proton gradient across the membrane. The catalytic sites are hosted primarily by the beta subunits. This Oleidesulfovibrio alaskensis (strain ATCC BAA-1058 / DSM 17464 / G20) (Desulfovibrio alaskensis) protein is ATP synthase subunit beta.